A 35-amino-acid polypeptide reads, in one-letter code: Unknown protein 14 from 2D-PAGE (35 aa).

The segment at Val-1 to Asp-35 is disordered.

The sequence is that of Unknown protein 14 from 2D-PAGE from Bombyx mori (Silk moth).